Reading from the N-terminus, the 378-residue chain is Protein RecA (378 aa).

79–86 lines the ATP pocket; sequence GPESSGKT.

The protein belongs to the RecA family.

The protein resides in the cytoplasm. In terms of biological role, can catalyze the hydrolysis of ATP in the presence of single-stranded DNA, the ATP-dependent uptake of single-stranded DNA by duplex DNA, and the ATP-dependent hybridization of homologous single-stranded DNAs. It interacts with LexA causing its activation and leading to its autocatalytic cleavage. In Streptococcus equi subsp. zooepidemicus (strain H70), this protein is Protein RecA.